Here is a 405-residue protein sequence, read N- to C-terminus: MVSIITFTKNVLVTLAFALLAQGLAIPEDIDKRAEKVVSLDFTVTRKPFNATAHGQHHQSQQQQQQQQQQPAQKRGTVQTSLINEGPSYAATITVGSNKQQQTVIVDTGSSDLWVVDSAAVCQVTYPGQSPTFCKQDGTYKPSSSTTSQNLGKAFSIRYEDGSSSQGTVYKDTIGLGGASITNQQFADVTTTSVDQGILGIGFTGDESSPTYDNVPVTLKKQGIINKNAYSLYLNSASASSGTIIFGGVDNAKYTGSLTALPITSSNELRVQLSTINIAGTTVSASTTPVLDSGTTLTYFSQTIADKLAAAVGAKWNSYYQLYTSSCNLAGNIVFNFAKGVTISVPLSEFVLQDGNSCYFGVSRDSATILGDNFLRRAYAVYDLDGNTISLAQVKYTTSSSISTL.

The N-terminal stretch at 1–25 is a signal peptide; the sequence is MVSIITFTKNVLVTLAFALLAQGLA. A glycan (N-linked (GlcNAc...) asparagine) is linked at asparagine 50. The tract at residues 52–78 is disordered; it reads TAHGQHHQSQQQQQQQQQQPAQKRGTV. Residues 58–70 are compositionally biased toward low complexity; sequence HQSQQQQQQQQQQ. Residues 89–392 enclose the Peptidase A1 domain; sequence YAATITVGSN…DLDGNTISLA (304 aa). The active site involves aspartate 107. 107–109 contacts pepstatin A; sequence DTG. The cysteines at positions 122 and 134 are disulfide-linked. The active site involves aspartate 292. 292-296 is a binding site for pepstatin A; it reads DSGTT. A disulfide bridge connects residues cysteine 327 and cysteine 358.

It belongs to the peptidase A1 family. Monomer.

It localises to the secreted. The catalysed reaction is Preferential cleavage at the carboxyl of hydrophobic amino acids, but fails to cleave 15-Leu-|-Tyr-16, 16-Tyr-|-Leu-17 and 24-Phe-|-Phe-25 of insulin B chain. Activates trypsinogen, and degrades keratin.. Its function is as follows. Secreted aspartic peptidases (SAPs) are a group of ten acidic hydrolases considered as key virulence factors. These enzymes supply the fungus with nutrient amino acids as well as are able to degrade the selected host's proteins involved in the immune defense. Moreover, acts toward human hemoglobin though limited proteolysis to generate a variety of antimicrobial hemocidins, enabling to compete with the other microorganisms of the same physiological niche using the microbicidal peptides generated from the host protein. Functionally, plays a key role in defense against host by cleaving histatin-5 (Hst 5), a peptide from human saliva that carries out fungicidal activity. The cleavage rate decreases in an order of SAP2 &gt; SAP9 &gt; SAP3 &gt; SAP7 &gt; SAP4 &gt; SAP1 &gt; SAP8. The hydrolysis of Hst 5 by SAP8 causes production of the DSHAKRHHGY, HHSHRGY and FHEKHHSHRGY peptides. This is Secreted aspartic protease 8 from Candida albicans (Yeast).